The chain runs to 119 residues: MPRVKRGVTARARHKKVLTKAKGYYGARSRVFRVAKQAVIKAAQYAYRDRKQRKRQFRALWIVRINAAAREHGLSYSRLINGLMKASVAIDRKNLAELAVYDKAAFGKLAEKAKQALGG.

It belongs to the bacterial ribosomal protein bL20 family.

Its function is as follows. Binds directly to 23S ribosomal RNA and is necessary for the in vitro assembly process of the 50S ribosomal subunit. It is not involved in the protein synthesizing functions of that subunit. In Coxiella burnetii (strain CbuK_Q154) (Coxiella burnetii (strain Q154)), this protein is Large ribosomal subunit protein bL20.